Consider the following 381-residue polypeptide: UDP-4-amino-4-deoxy-L-arabinose--oxoglutarate aminotransferase (381 aa).

An N6-(pyridoxal phosphate)lysine modification is found at lysine 182.

The protein belongs to the DegT/DnrJ/EryC1 family. ArnB subfamily. Homodimer. The cofactor is pyridoxal 5'-phosphate.

The enzyme catalyses UDP-4-amino-4-deoxy-beta-L-arabinose + 2-oxoglutarate = UDP-beta-L-threo-pentopyranos-4-ulose + L-glutamate. It functions in the pathway nucleotide-sugar biosynthesis; UDP-4-deoxy-4-formamido-beta-L-arabinose biosynthesis; UDP-4-deoxy-4-formamido-beta-L-arabinose from UDP-alpha-D-glucuronate: step 2/3. The protein operates within bacterial outer membrane biogenesis; lipopolysaccharide biosynthesis. Catalyzes the conversion of UDP-4-keto-arabinose (UDP-Ara4O) to UDP-4-amino-4-deoxy-L-arabinose (UDP-L-Ara4N). The modified arabinose is attached to lipid A and is required for resistance to polymyxin and cationic antimicrobial peptides. The sequence is that of UDP-4-amino-4-deoxy-L-arabinose--oxoglutarate aminotransferase from Edwardsiella ictaluri (strain 93-146).